The primary structure comprises 73 residues: Large ribosomal subunit protein bL31 (73 aa).

The protein belongs to the bacterial ribosomal protein bL31 family. Type A subfamily. As to quaternary structure, part of the 50S ribosomal subunit.

Binds the 23S rRNA. This is Large ribosomal subunit protein bL31 from Brucella abortus (strain 2308).